The chain runs to 316 residues: Ribosomal RNA small subunit methyltransferase H (316 aa).

S-adenosyl-L-methionine is bound by residues G36–H38, D56, F83, D104, and Q111.

This sequence belongs to the methyltransferase superfamily. RsmH family.

It localises to the cytoplasm. It catalyses the reaction cytidine(1402) in 16S rRNA + S-adenosyl-L-methionine = N(4)-methylcytidine(1402) in 16S rRNA + S-adenosyl-L-homocysteine + H(+). In terms of biological role, specifically methylates the N4 position of cytidine in position 1402 (C1402) of 16S rRNA. The sequence is that of Ribosomal RNA small subunit methyltransferase H from Protochlamydia amoebophila (strain UWE25).